Reading from the N-terminus, the 415-residue chain is Heterogeneous nuclear ribonucleoprotein F (415 aa).

M1 carries the N-acetylmethionine modification. The residue at position 2 (M2) is an N-acetylmethionine; in Heterogeneous nuclear ribonucleoprotein F, N-terminally processed. One can recognise an RRM 1 domain in the interval 13–85 (VKLRGLPWSC…ESMGHRYIEV (73 aa)). Residue K72 forms a Glycyl lysine isopeptide (Lys-Gly) (interchain with G-Cter in SUMO) linkage. An interaction with RNA region spans residues 81–86 (RYIEVF). A Glycyl lysine isopeptide (Lys-Gly) (interchain with G-Cter in SUMO2) cross-link involves residue K87. 3 positions are modified to phosphoserine: S104, S107, and S161. The RRM 2 domain occupies 111 to 188 (GFVRLRGLPF…RYIEVFKSSQ (78 aa)). Residue K167 forms a Glycyl lysine isopeptide (Lys-Gly) (interchain with G-Cter in SUMO2) linkage. The interaction with RNA stretch occupies residues 179–184 (RYIEVF). K185 is covalently cross-linked (Glycyl lysine isopeptide (Lys-Gly) (interchain with G-Cter in SUMO2)). S187, S193, and S195 each carry phosphoserine. K200 carries the N6-acetyllysine; alternate modification. K200 is covalently cross-linked (Glycyl lysine isopeptide (Lys-Gly) (interchain with G-Cter in SUMO2); alternate). T215 is subject to Phosphothreonine. The residue at position 224 (K224) is an N6-acetyllysine; alternate. K224 is covalently cross-linked (Glycyl lysine isopeptide (Lys-Gly) (interchain with G-Cter in SUMO2); alternate). Phosphoserine is present on S265. Residues 289 to 366 (HCVHMRGLPY…IELFLNSTTG (78 aa)) form the RRM 3 domain. The interval 355–360 (RYIELF) is interaction with RNA.

In terms of assembly, identified in the spliceosome C complex. Interacts with AGO1, AGO2, TBP and TXNL4/DIM1. Post-translationally, sumoylated.

It is found in the nucleus. It localises to the nucleoplasm. Functionally, component of the heterogeneous nuclear ribonucleoprotein (hnRNP) complexes which provide the substrate for the processing events that pre-mRNAs undergo before becoming functional, translatable mRNAs in the cytoplasm. Plays a role in the regulation of alternative splicing events. Binds G-rich sequences in pre-mRNAs and keeps target RNA in an unfolded state. In Macaca fascicularis (Crab-eating macaque), this protein is Heterogeneous nuclear ribonucleoprotein F (HNRNPF).